The following is an 85-amino-acid chain: Translation initiation factor IF-1 (85 aa).

The S1-like domain occupies 1 to 72 (MAKEELLEMR…TKARITYRFM (72 aa)).

The protein belongs to the IF-1 family. In terms of assembly, component of the 30S ribosomal translation pre-initiation complex which assembles on the 30S ribosome in the order IF-2 and IF-3, IF-1 and N-formylmethionyl-tRNA(fMet); mRNA recruitment can occur at any time during PIC assembly.

It localises to the cytoplasm. Its function is as follows. One of the essential components for the initiation of protein synthesis. Stabilizes the binding of IF-2 and IF-3 on the 30S subunit to which N-formylmethionyl-tRNA(fMet) subsequently binds. Helps modulate mRNA selection, yielding the 30S pre-initiation complex (PIC). Upon addition of the 50S ribosomal subunit IF-1, IF-2 and IF-3 are released leaving the mature 70S translation initiation complex. The chain is Translation initiation factor IF-1 from Erythrobacter litoralis (strain HTCC2594).